Consider the following 171-residue polypeptide: Sec-independent protein translocase protein TatB (171 aa).

Residues 1–21 traverse the membrane as a helical segment; the sequence is MFDIGFSELLLVFIIGLVVLG. The interval 89 to 171 is disordered; it reads AESMKRSYVA…APSPSSSDKP (83 aa). Basic and acidic residues predominate over residues 100-123; that stretch reads DPEKASDEAHTIHNPVVKDNETAH. Positions 130 to 139 are enriched in polar residues; sequence AAQTQASSPE.

It belongs to the TatB family. In terms of assembly, the Tat system comprises two distinct complexes: a TatABC complex, containing multiple copies of TatA, TatB and TatC subunits, and a separate TatA complex, containing only TatA subunits. Substrates initially bind to the TatABC complex, which probably triggers association of the separate TatA complex to form the active translocon.

The protein localises to the cell inner membrane. In terms of biological role, part of the twin-arginine translocation (Tat) system that transports large folded proteins containing a characteristic twin-arginine motif in their signal peptide across membranes. Together with TatC, TatB is part of a receptor directly interacting with Tat signal peptides. TatB may form an oligomeric binding site that transiently accommodates folded Tat precursor proteins before their translocation. The polypeptide is Sec-independent protein translocase protein TatB (Escherichia coli O1:K1 / APEC).